The primary structure comprises 326 residues: L-carnitine dehydrogenase (326 aa).

Position 19-24 (G19–G24) interacts with NAD(+).

The protein belongs to the 3-hydroxyacyl-CoA dehydrogenase family. L-carnitine dehydrogenase subfamily. Homodimer.

It is found in the cytoplasm. It carries out the reaction carnitine + NAD(+) = 3-dehydrocarnitine + NADH + H(+). Its pathway is amine and polyamine metabolism; carnitine metabolism. Its function is as follows. Catalyzes the NAD(+)-dependent oxidation of L-carnitine to 3-dehydrocarnitine. This is L-carnitine dehydrogenase from Bacillus cereus (strain ZK / E33L).